A 150-amino-acid polypeptide reads, in one-letter code: uncharacterized protein (150 aa).

The span at 1 to 19 (MNDDSSSSSSGDSSDGSSG) shows a compositional bias: low complexity. Disordered stretches follow at residues 1–21 (MNDDSSSSSSGDSSDGSSGTT) and 85–131 (EPEA…AYPE). A compositionally biased stretch (pro residues) spans 106-115 (RPPPTEPPTV).

This is an uncharacterized protein from Schizosaccharomyces pombe (strain 972 / ATCC 24843) (Fission yeast).